The chain runs to 610 residues: UvrABC system protein C (610 aa).

A GIY-YIG domain is found at 13-91 (HLPGVYRMYD…IKENQPKYNV (79 aa)). In terms of domain architecture, UVR spans 201–236 (GQVVEHLVQKMENAAQELDFEAAARFRDQIQSVRAV).

Belongs to the UvrC family. In terms of assembly, interacts with UvrB in an incision complex.

The protein localises to the cytoplasm. Its function is as follows. The UvrABC repair system catalyzes the recognition and processing of DNA lesions. UvrC both incises the 5' and 3' sides of the lesion. The N-terminal half is responsible for the 3' incision and the C-terminal half is responsible for the 5' incision. The polypeptide is UvrABC system protein C (Actinobacillus pleuropneumoniae serotype 7 (strain AP76)).